The sequence spans 163 residues: Small ribosomal subunit protein uS9 (163 aa).

Polar residues predominate over residues 1–11 (MAENTNDSQVV). A disordered region spans residues 1-40 (MAENTNDSQVVETEEELTNYTTETNAGAGTGTSAIEPGYG). Positions 18–27 (TNYTTETNAG) are enriched in low complexity.

Belongs to the universal ribosomal protein uS9 family.

This chain is Small ribosomal subunit protein uS9, found in Bifidobacterium longum (strain DJO10A).